A 359-amino-acid polypeptide reads, in one-letter code: 3-isopropylmalate dehydrogenase (359 aa).

74-85 (GPKWGTGSVRPE) lines the NAD(+) pocket. Residues arginine 92, arginine 102, arginine 131, and aspartate 220 each contribute to the substrate site. Positions 220, 245, and 249 each coordinate Mg(2+). Position 284–295 (284–295 (GSAPDLPANKVN)) interacts with NAD(+).

This sequence belongs to the isocitrate and isopropylmalate dehydrogenases family. Homodimer. The cofactor is Mg(2+). It depends on Mn(2+) as a cofactor.

Its subcellular location is the cytoplasm. It carries out the reaction (2R,3S)-3-isopropylmalate + NAD(+) = 4-methyl-2-oxopentanoate + CO2 + NADH. It functions in the pathway amino-acid biosynthesis; L-leucine biosynthesis; L-leucine from 3-methyl-2-oxobutanoate: step 3/4. Its function is as follows. Catalyzes the oxidation of 3-carboxy-2-hydroxy-4-methylpentanoate (3-isopropylmalate) to 3-carboxy-4-methyl-2-oxopentanoate. The product decarboxylates to 4-methyl-2 oxopentanoate. The sequence is that of 3-isopropylmalate dehydrogenase (LEU2) from Kluyveromyces marxianus (Yeast).